A 151-amino-acid polypeptide reads, in one-letter code: UPF0208 membrane protein ECA3038 (151 aa).

The next 2 membrane-spanning stretches (helical) occupy residues 46 to 66 and 69 to 89; these read FGIR…IALG and LGPA…GLWW.

It belongs to the UPF0208 family.

The protein localises to the cell inner membrane. The chain is UPF0208 membrane protein ECA3038 from Pectobacterium atrosepticum (strain SCRI 1043 / ATCC BAA-672) (Erwinia carotovora subsp. atroseptica).